The primary structure comprises 490 residues: Cytochrome P450 90D2 (490 aa).

A helical membrane pass occupies residues 4-24; sequence AAAGWAAPAFAVAAVVIWVVL. C437 contributes to the heme binding site.

It belongs to the cytochrome P450 family. The cofactor is heme. In terms of tissue distribution, expressed at low levels leaf blades, shoot apex and elongating stem.

The protein resides in the membrane. It carries out the reaction 6-deoxoteasterone + reduced [NADPH--hemoprotein reductase] + O2 = 3-dehydro-6-deoxoteasterone + oxidized [NADPH--hemoprotein reductase] + 2 H2O + H(+). It participates in plant hormone biosynthesis; brassinosteroid biosynthesis. In terms of biological role, catalyzes the C6-oxidation step in brassinosteroids biosynthesis. May convert 6-deoxoteasterone (6-deoxoTE) to 3-dehydro-6-deoxoteasterone (6-deoxo3DT, 6-deoxo3DHT), and teasterone (TE) to 3-dehydroteasterone (3DT, 3-DHT). Involved in the elongation of leaf sheaths and stems. This chain is Cytochrome P450 90D2, found in Oryza sativa subsp. japonica (Rice).